Here is a 652-residue protein sequence, read N- to C-terminus: Aspartate--tRNA ligase, mitochondrial (652 aa).

Residues 1-46 (MYLGSWLNRLGRGLSRPIGKTKQPIWGSLSRSLTLSSQRVPEFSSF) constitute a mitochondrion transit peptide. Thr-218 is subject to Phosphothreonine. Ser-241 bears the Phosphoserine mark. Residues 243 to 246 (QQFK) form an aspartate region. Residue Arg-265 coordinates L-aspartate. Residues 265-267 (RDE) and Glu-534 each bind ATP. L-aspartate is bound at residue Arg-541. 583 to 586 (GLDR) lines the ATP pocket.

Belongs to the class-II aminoacyl-tRNA synthetase family. Type 1 subfamily. Homodimer.

The protein resides in the mitochondrion matrix. It localises to the mitochondrion membrane. It catalyses the reaction tRNA(Asp) + L-aspartate + ATP = L-aspartyl-tRNA(Asp) + AMP + diphosphate. Catalyzes the attachment of aspartate to tRNA(Asp) in a two-step reaction: aspartate is first activated by ATP to form Asp-AMP and then transferred to the acceptor end of tRNA(Asp). The polypeptide is Aspartate--tRNA ligase, mitochondrial (Dars2) (Rattus norvegicus (Rat)).